The primary structure comprises 432 residues: Trigger factor (432 aa).

The region spanning 161–246 (GKRVSIDFVG…VNKVEARQLP (86 aa)) is the PPIase FKBP-type domain.

The protein belongs to the FKBP-type PPIase family. Tig subfamily.

The protein resides in the cytoplasm. The catalysed reaction is [protein]-peptidylproline (omega=180) = [protein]-peptidylproline (omega=0). Involved in protein export. Acts as a chaperone by maintaining the newly synthesized protein in an open conformation. Functions as a peptidyl-prolyl cis-trans isomerase. This is Trigger factor from Vibrio vulnificus (strain YJ016).